A 216-amino-acid polypeptide reads, in one-letter code: Adenylate kinase (216 aa).

10–15 is a binding site for ATP; it reads GAGKGT. An NMP region spans residues 30-59; it reads STGDIFRKNISEKTPLGVKAKEYMDKGQLV. Residues Thr31, Arg36, 57–59, 85–88, and Gln92 contribute to the AMP site; these read QLV and GFPR. The interval 126–163 is LID; that stretch reads GRRVCPSCGASYHIKFNPPKIEGLCDVCKKEVIQRKDD. Arg127 serves as a coordination point for ATP. The Zn(2+) site is built by Cys130 and Cys133. Position 136–137 (136–137) interacts with ATP; sequence SY. Zn(2+) is bound by residues Cys150 and Cys153. Residues Arg160 and Arg171 each coordinate AMP. Gln199 lines the ATP pocket.

The protein belongs to the adenylate kinase family. As to quaternary structure, monomer.

The protein resides in the cytoplasm. The catalysed reaction is AMP + ATP = 2 ADP. It participates in purine metabolism; AMP biosynthesis via salvage pathway; AMP from ADP: step 1/1. Its function is as follows. Catalyzes the reversible transfer of the terminal phosphate group between ATP and AMP. Plays an important role in cellular energy homeostasis and in adenine nucleotide metabolism. In Clostridium novyi (strain NT), this protein is Adenylate kinase.